A 140-amino-acid polypeptide reads, in one-letter code: Cysteine desulfuration protein SufE (140 aa).

Cysteine 51 serves as the catalytic Cysteine persulfide intermediate.

The protein belongs to the SufE family. As to quaternary structure, homodimer. Interacts with SufS.

It is found in the cytoplasm. Its pathway is cofactor biosynthesis; iron-sulfur cluster biosynthesis. Its function is as follows. Participates in cysteine desulfuration mediated by SufS. Cysteine desulfuration mobilizes sulfur from L-cysteine to yield L-alanine and constitutes an essential step in sulfur metabolism for biosynthesis of a variety of sulfur-containing biomolecules. Functions as a sulfur acceptor for SufS, by mediating the direct transfer of the sulfur atom from the S-sulfanylcysteine of SufS, an intermediate product of cysteine desulfuration process. The chain is Cysteine desulfuration protein SufE from Yersinia pestis bv. Antiqua (strain Antiqua).